We begin with the raw amino-acid sequence, 431 residues long: Enolase (431 aa).

Q163 contacts (2R)-2-phosphoglycerate. Catalysis depends on E205, which acts as the Proton donor. Residues D242, E288, and D315 each contribute to the Mg(2+) site. (2R)-2-phosphoglycerate-binding residues include K340, R369, S370, and K391. K340 functions as the Proton acceptor in the catalytic mechanism.

This sequence belongs to the enolase family. Mg(2+) is required as a cofactor.

The protein localises to the cytoplasm. It localises to the secreted. It is found in the cell surface. It carries out the reaction (2R)-2-phosphoglycerate = phosphoenolpyruvate + H2O. Its pathway is carbohydrate degradation; glycolysis; pyruvate from D-glyceraldehyde 3-phosphate: step 4/5. Catalyzes the reversible conversion of 2-phosphoglycerate (2-PG) into phosphoenolpyruvate (PEP). It is essential for the degradation of carbohydrates via glycolysis. This is Enolase from Bacillus cereus (strain B4264).